Consider the following 201-residue polypeptide: Small ribosomal subunit protein uS4 (201 aa).

The region spanning 93-156 is the S4 RNA-binding domain; that stretch reads RRLDNMVYRL…KNLDIIKNAV (64 aa).

This sequence belongs to the universal ribosomal protein uS4 family. In terms of assembly, part of the 30S ribosomal subunit. Contacts protein S5. The interaction surface between S4 and S5 is involved in control of translational fidelity.

One of the primary rRNA binding proteins, it binds directly to 16S rRNA where it nucleates assembly of the body of the 30S subunit. In terms of biological role, with S5 and S12 plays an important role in translational accuracy. This chain is Small ribosomal subunit protein uS4, found in Limosilactobacillus reuteri subsp. reuteri (strain JCM 1112) (Lactobacillus reuteri).